The following is a 630-amino-acid chain: Zinc finger protein 37 homolog (630 aa).

Disordered regions lie at residues 1 to 45 (MSVS…SAAE), 77 to 172 (KPDM…PSKK), and 193 to 285 (HSRN…KHEK). Over residues 14 to 30 (ETVDRRRSAETTKEAGR) the composition is skewed to basic and acidic residues. Residues 32-103 (LEMAVSEPEA…KGKRPSQGCP (72 aa)) form the KRAB domain. Residue Ser-42 is modified to Phosphoserine. A compositionally biased stretch (basic and acidic residues) spans 110-122 (KQKETDGKVQKDD). The span at 161 to 172 (NNLHKKHVPSKK) shows a compositional bias: basic residues. The segment covering 193-206 (HSRNCVKRKSDAAK) has biased composition (basic and acidic residues). A compositionally biased stretch (basic residues) spans 221-231 (KGKKQTGKKHE). Basic and acidic residues-rich tracts occupy residues 232 to 243 (KLSSHSSSDKCN) and 260 to 274 (IKQD…HEKS). 2 C2H2-type zinc fingers span residues 293 to 315 (YECN…QRVH) and 321 to 343 (YECN…QRTH). Residues 349–367 (YECIQCGKAHGHKHALTDH) form a C2H2-type 3; atypical zinc finger. 9 C2H2-type zinc fingers span residues 377–399 (YECA…VRSH), 405–427 (YECK…VRTH), 433–455 (YECN…MRIH), 461–483 (FECN…QRTH), 489–511 (YKCN…MRTH), 517–539 (FECN…QRVH), 545–567 (YECN…QRTH), 573–595 (YECN…QRSH), and 601–623 (YECN…VKTH).

This sequence belongs to the krueppel C2H2-type zinc-finger protein family. In terms of tissue distribution, expressed at low level in several tissues including fetal cartilage.

The protein resides in the nucleus. Its function is as follows. May be involved in transcriptional regulation. This Homo sapiens (Human) protein is Zinc finger protein 37 homolog (ZFP37).